Reading from the N-terminus, the 598-residue chain is Probable translation initiation factor IF-2 (598 aa).

In terms of domain architecture, tr-type G spans 3-225 (LRCPIVSVLG…GLAQRFLEQK (223 aa)). Residues 12–19 (GHVDHGKT) form a G1 region. 12–19 (GHVDHGKT) is a GTP binding site. Residues 37–41 (GITQH) are G2. Residues 76-79 (DTPG) are G3. GTP contacts are provided by residues 76-80 (DTPGH) and 130-133 (NKVD). The tract at residues 130–133 (NKVD) is G4. Residues 200–202 (SAM) are G5.

Belongs to the TRAFAC class translation factor GTPase superfamily. Classic translation factor GTPase family. IF-2 subfamily.

In terms of biological role, function in general translation initiation by promoting the binding of the formylmethionine-tRNA to ribosomes. Seems to function along with eIF-2. The sequence is that of Probable translation initiation factor IF-2 from Methanococcus maripaludis (strain DSM 14266 / JCM 13030 / NBRC 101832 / S2 / LL).